The following is a 140-amino-acid chain: MPKKGKGKPAFSRRRIATGLQVGSYVRVADNSGAKLVKIIGVPGYKGRLRRIPPAGIGDLVVVTVKKGTPEMRKQVVKAVIVRQKRPFRRPDGTWVAFEDNAVAIVTPEGTPKGSEIRGPIAKEVAERWPQLANIATIVV.

The protein belongs to the universal ribosomal protein uL14 family. In terms of assembly, part of the 50S ribosomal subunit. Forms a cluster with proteins L3 and L24e, part of which may contact the 16S rRNA in 2 intersubunit bridges.

Functionally, binds to 23S rRNA. Forms part of two intersubunit bridges in the 70S ribosome. The polypeptide is Large ribosomal subunit protein uL14 (Staphylothermus marinus (strain ATCC 43588 / DSM 3639 / JCM 9404 / F1)).